The primary structure comprises 224 residues: Giant hemoglobin linker AV-1 chain (224 aa).

Positions His62 to Val103 constitute an LDL-receptor class A domain. 3 disulfides stabilise this stretch: Cys64–Cys77, Cys71–Cys90, and Cys84–Cys101. Asn108 is a glycosylation site (N-linked (GlcNAc...) asparagine).

As to quaternary structure, giant hemoglobin is composed of four heme-containing chains (AI to AIV), and two linker chains (AV and AVI).

Functionally, acts as a linker for the assembly of heme-containing chains in the construction of giant hemoglobin. The chain is Giant hemoglobin linker AV-1 chain from Lamellibrachia sp. (Deep-sea giant tube worm).